A 460-amino-acid polypeptide reads, in one-letter code: Nuclear distribution protein PAC1 (460 aa).

The LisH domain occupies 9 to 41; that stretch reads QAEELHKSIIAYLAANNLQDSANAMRTELGLGE. Residues 61 to 88 are a coiled coil; it reads TSVVRLQKKIMDLEAQTQTLQTELNSAT. A compositionally biased stretch (polar residues) spans 82 to 92; the sequence is TELNSATPTSN. The tract at residues 82-105 is disordered; that stretch reads TELNSATPTSNRRGDPSSWLPAGP. WD repeat units lie at residues 112–153, 155–195, 199–246, 249–288, 293–354, 355–394, and 399–456; these read SHRT…RTVK, HTKA…QNIR, GHDH…CVKT, GHAD…PEAK, GHEH…KTLI, GHDN…KCVK, and SHEH…MSLR. Residues 414 to 433 form a disordered region; that stretch reads IKDKGPGEETNGDVGTPKKA.

Belongs to the WD repeat LIS1/nudF family. As to quaternary structure, self-associates. Interacts with NDL1 and dynein.

It localises to the cytoplasm. Its subcellular location is the cytoskeleton. The protein localises to the spindle pole. Functionally, positively regulates the activity of the minus-end directed microtubule motor protein dynein. May enhance dynein-mediated microtubule sliding by targeting dynein to the microtubule plus end. Required for nuclear migration during vegetative growth as well as development. Required for retrograde early endosome (EE) transport from the hyphal tip. Required for localization of dynein to the mitotic spindle poles. Recruits additional proteins to the dynein complex at SPBs. This is Nuclear distribution protein PAC1 from Gibberella zeae (strain ATCC MYA-4620 / CBS 123657 / FGSC 9075 / NRRL 31084 / PH-1) (Wheat head blight fungus).